The chain runs to 351 residues: Histidinol-phosphate aminotransferase 2 (351 aa).

The residue at position 210 (Lys210) is an N6-(pyridoxal phosphate)lysine.

The protein belongs to the class-II pyridoxal-phosphate-dependent aminotransferase family. Histidinol-phosphate aminotransferase subfamily. As to quaternary structure, homodimer. It depends on pyridoxal 5'-phosphate as a cofactor.

The catalysed reaction is L-histidinol phosphate + 2-oxoglutarate = 3-(imidazol-4-yl)-2-oxopropyl phosphate + L-glutamate. It functions in the pathway amino-acid biosynthesis; L-histidine biosynthesis; L-histidine from 5-phospho-alpha-D-ribose 1-diphosphate: step 7/9. This is Histidinol-phosphate aminotransferase 2 (hisC2) from Rhizobium meliloti (strain 1021) (Ensifer meliloti).